The chain runs to 51 residues: Sperm protamine P1 (51 aa).

Cystine bridges form between Cys7-Cys15 and Cys38-Cys48.

Belongs to the protamine P1 family. In terms of assembly, cross-linked by interchain disulfide bonds around the DNA-helix. In terms of processing, phosphorylated by SRPK1. In terms of tissue distribution, testis.

It is found in the nucleus. It localises to the chromosome. Protamines substitute for histones in the chromatin of sperm during the haploid phase of spermatogenesis. They compact sperm DNA into a highly condensed, stable and inactive complex. This Mus musculus (Mouse) protein is Sperm protamine P1 (Prm1).